The sequence spans 357 residues: Glucose 1-dehydrogenase (357 aa).

A Zn(2+)-binding site is contributed by D38. Substrate contacts are provided by T40 and H49. Zn(2+) contacts are provided by H63 and E64. Substrate-binding residues include E114 and E150. E150 lines the Zn(2+) pocket. NADP(+) contacts are provided by residues 181-184, 207-208, S228, 272-274, and 301-303; these read NGSL, RR, LGV, and SVN. Position 303 (N303) interacts with substrate.

It belongs to the zinc-containing alcohol dehydrogenase family. Glucose 1-dehydrogenase subfamily. In terms of assembly, homodimer. Requires Zn(2+) as cofactor.

The enzyme catalyses D-glucose + NAD(+) = D-glucono-1,5-lactone + NADH + H(+). It carries out the reaction D-glucose + NADP(+) = D-glucono-1,5-lactone + NADPH + H(+). With respect to regulation, activated by molar concentrations of KCl or NaCl. Inhibited by EDTA in vitro. Functionally, catalyzes the NAD(P)(+)-dependent oxidation of D-glucose to D-gluconate. Displays broad substrate specificity since it is able to catalyze the oxidation of a number of alternative aldose sugars, such as D-xylose, D-galactose, and D-fucose, to the corresponding glyconate. Can utilize both NAD(+) and NADP(+) as electron acceptor, with a preference for NADP(+). Physiologically, seems to be involved in the degradation of glucose through a modified Entner-Doudoroff pathway. The sequence is that of Glucose 1-dehydrogenase from Haloferax mediterranei (strain ATCC 33500 / DSM 1411 / JCM 8866 / NBRC 14739 / NCIMB 2177 / R-4) (Halobacterium mediterranei).